A 1562-amino-acid chain; its full sequence is E3 ubiquitin-protein ligase listerin (1562 aa).

HEAT repeat units follow at residues 41 to 78, 127 to 164, 175 to 217, 262 to 301, 304 to 348, 495 to 532, 555 to 592, 813 to 850, 908 to 945, 997 to 1037, 1047 to 1085, 1188 to 1226, 1263 to 1298, and 1299 to 1339; these read SLYSNELKLIFKSLLKRDETTKEKALMDLSNLISDFNQ, KFLKDFIPLILLGTCELDYSVSKPSLNELTECFNKDPA, EQLL…SAVL, ETVLRLIDVLYTRGYMPSHKNIMKLAVKKLLKSLTHITSK, LKVC…VSRT, SAISRLFDFFVQLIETDPSNVFNKYDGVYDALNYFLDS, STYQNFAGIMAQYSNSKFFKMNTDAITSLEDFFIVALS, IRYALFLDALLDALPERVNNHIVAFITVVSELVTDYNC, YYSRVLYKVLLNSIDTVSSTTLNGLLASVESFVTKTVR, FKSL…WLDS, TVRLLLLDFFTKLMRFEGVRDMGITAFELSERLLADSLS, INQSRLLTTLLGSLVVKTQQDIIIEYELRIQKQTGSDVD, NSFIKYLWYWHLILMYFKDTSYNMRQIFIEQLKEAG, and LINR…NFSP. The RING-type zinc finger occupies 1508 to 1555; sequence CAICYSILHAVDRKLPSKTCPTCKNKFHGACLYKWFRSSGNNTCPLCR.

It belongs to the LTN1 family. Component of the ribosome quality control complex (RQC), composed of the E3 ubiquitin ligase RKR1/LTN1, RQC1 and RQC2, as well as CDC48 and its ubiquitin-binding cofactors associated with the 60S ribosomal subunits.

The protein resides in the nucleus. Its subcellular location is the cytoplasm. The protein localises to the cytosol. The enzyme catalyses S-ubiquitinyl-[E2 ubiquitin-conjugating enzyme]-L-cysteine + [acceptor protein]-L-lysine = [E2 ubiquitin-conjugating enzyme]-L-cysteine + N(6)-ubiquitinyl-[acceptor protein]-L-lysine.. Its pathway is protein modification; protein ubiquitination. In terms of biological role, E3 ubiquitin-protein ligase component of the ribosome quality control complex (RQC), a ribosome-associated complex that mediates ubiquitination and extraction of incompletely synthesized nascent chains for proteasomal degradation. Mediates ubiquitination of proteins derived from mRNAs lacking stop codons (non-stop proteins) and other translation arrest products induced by poly-lysine sequences and tandem rare codons. Ubiquitination leads to CDC48 recruitment for extraction and degradation of the incomplete translation product. May indirectly play a role in chromatin function and transcription. The protein is E3 ubiquitin-protein ligase listerin of Saccharomyces cerevisiae (strain ATCC 204508 / S288c) (Baker's yeast).